A 184-amino-acid polypeptide reads, in one-letter code: Ribosome-recycling factor (184 aa).

It belongs to the RRF family.

It localises to the cytoplasm. Its function is as follows. Responsible for the release of ribosomes from messenger RNA at the termination of protein biosynthesis. May increase the efficiency of translation by recycling ribosomes from one round of translation to another. The chain is Ribosome-recycling factor from Caldicellulosiruptor bescii (strain ATCC BAA-1888 / DSM 6725 / KCTC 15123 / Z-1320) (Anaerocellum thermophilum).